Here is a 433-residue protein sequence, read N- to C-terminus: Histidine--tRNA ligase (433 aa).

The protein belongs to the class-II aminoacyl-tRNA synthetase family. As to quaternary structure, homodimer.

The protein localises to the cytoplasm. The catalysed reaction is tRNA(His) + L-histidine + ATP = L-histidyl-tRNA(His) + AMP + diphosphate + H(+). The protein is Histidine--tRNA ligase of Azoarcus sp. (strain BH72).